Reading from the N-terminus, the 443-residue chain is 5-methylthioadenosine/S-adenosylhomocysteine deaminase 1 (443 aa).

Residues histidine 69 and histidine 71 each contribute to the Zn(2+) site. 2 residues coordinate substrate: glutamate 98 and histidine 191. Residue histidine 218 coordinates Zn(2+). The substrate site is built by glutamate 221 and aspartate 306. A Zn(2+)-binding site is contributed by aspartate 306.

The protein belongs to the metallo-dependent hydrolases superfamily. MTA/SAH deaminase family. It depends on Zn(2+) as a cofactor.

It carries out the reaction S-adenosyl-L-homocysteine + H2O + H(+) = S-inosyl-L-homocysteine + NH4(+). It catalyses the reaction S-methyl-5'-thioadenosine + H2O + H(+) = S-methyl-5'-thioinosine + NH4(+). In terms of biological role, catalyzes the deamination of 5-methylthioadenosine and S-adenosyl-L-homocysteine into 5-methylthioinosine and S-inosyl-L-homocysteine, respectively. Is also able to deaminate adenosine. In Syntrophus aciditrophicus (strain SB), this protein is 5-methylthioadenosine/S-adenosylhomocysteine deaminase 1.